We begin with the raw amino-acid sequence, 25 residues long: WLGSALKIGAKLLPSVVGLFQKKKK.

Expressed by the venom gland.

The protein resides in the secreted. It localises to the target cell membrane. Functionally, has a broad spectrum of activity against both Gram-positive and Gram-negative bacteria and S.cerevisiae. Has insecticidal and hemolytic activities. May act by disrupting the integrity of the bacterial cell membrane. This Neoponera goeldii (Ponerine ant) protein is U1-poneritoxin-Ng1b.